We begin with the raw amino-acid sequence, 111 residues long: Aspartate 1-decarboxylase (111 aa).

Serine 25 acts as the Schiff-base intermediate with substrate; via pyruvic acid in catalysis. A Pyruvic acid (Ser) modification is found at serine 25. Threonine 57 contributes to the substrate binding site. Tyrosine 58 functions as the Proton donor in the catalytic mechanism. Position 73 to 75 (73 to 75 (GPA)) interacts with substrate.

This sequence belongs to the PanD family. In terms of assembly, heterooctamer of four alpha and four beta subunits. The cofactor is pyruvate. Is synthesized initially as an inactive proenzyme, which is activated by self-cleavage at a specific serine bond to produce a beta-subunit with a hydroxyl group at its C-terminus and an alpha-subunit with a pyruvoyl group at its N-terminus.

The protein localises to the cytoplasm. The catalysed reaction is L-aspartate + H(+) = beta-alanine + CO2. It functions in the pathway cofactor biosynthesis; (R)-pantothenate biosynthesis; beta-alanine from L-aspartate: step 1/1. Its function is as follows. Catalyzes the pyruvoyl-dependent decarboxylation of aspartate to produce beta-alanine. The chain is Aspartate 1-decarboxylase from Francisella tularensis subsp. novicida (strain U112).